A 218-amino-acid polypeptide reads, in one-letter code: N-(5'-phosphoribosyl)anthranilate isomerase (218 aa).

Belongs to the TrpF family.

It catalyses the reaction N-(5-phospho-beta-D-ribosyl)anthranilate = 1-(2-carboxyphenylamino)-1-deoxy-D-ribulose 5-phosphate. It participates in amino-acid biosynthesis; L-tryptophan biosynthesis; L-tryptophan from chorismate: step 3/5. This is N-(5'-phosphoribosyl)anthranilate isomerase from Acetivibrio thermocellus (strain ATCC 27405 / DSM 1237 / JCM 9322 / NBRC 103400 / NCIMB 10682 / NRRL B-4536 / VPI 7372) (Clostridium thermocellum).